Consider the following 208-residue polypeptide: Small ribosomal subunit protein uS4 (208 aa).

The interval Gly24–Glu52 is disordered. The S4 RNA-binding domain maps to Ser98–Ala160.

This sequence belongs to the universal ribosomal protein uS4 family. As to quaternary structure, part of the 30S ribosomal subunit. Contacts protein S5. The interaction surface between S4 and S5 is involved in control of translational fidelity.

In terms of biological role, one of the primary rRNA binding proteins, it binds directly to 16S rRNA where it nucleates assembly of the body of the 30S subunit. With S5 and S12 plays an important role in translational accuracy. The chain is Small ribosomal subunit protein uS4 from Acinetobacter baumannii (strain ACICU).